Here is a 241-residue protein sequence, read N- to C-terminus: DNA repair protein RecO (241 aa).

This sequence belongs to the RecO family.

Functionally, involved in DNA repair and RecF pathway recombination. This chain is DNA repair protein RecO, found in Yersinia pseudotuberculosis serotype O:1b (strain IP 31758).